Here is an 88-residue protein sequence, read N- to C-terminus: Cell division topological specificity factor (88 aa).

The protein belongs to the MinE family.

Prevents the cell division inhibition by proteins MinC and MinD at internal division sites while permitting inhibition at polar sites. This ensures cell division at the proper site by restricting the formation of a division septum at the midpoint of the long axis of the cell. The sequence is that of Cell division topological specificity factor from Aromatoleum aromaticum (strain DSM 19018 / LMG 30748 / EbN1) (Azoarcus sp. (strain EbN1)).